The chain runs to 935 residues: GPI ethanolamine phosphate transferase 1 (935 aa).

Residues 1–5 (MFGRL) lie on the Cytoplasmic side of the membrane. Residues 6–26 (LLLGILFHVVFLKSIFDIYFV) form a helical membrane-spanning segment. Residues 27 to 449 (TPLIHGMKQY…LQRYDWLLLR (423 aa)) lie on the Lumenal side of the membrane. N86, N134, N315, and N398 each carry an N-linked (GlcNAc...) asparagine glycan. The helical transmembrane segment at 450–470 (SIVFFGYLSWIGYVICFVFSL) threads the bilayer. The Cytoplasmic segment spans residues 471-483 (NIEPSSKIVKPVS). A helical membrane pass occupies residues 484 to 503 (VVKRVAFNIPFLLICIFFYI). The Lumenal portion of the chain corresponds to 504-509 (QSSPPF). Residues 510–530 (YYGYALFPTIFLQLIHSIFPN) traverse the membrane as a helical segment. Over 531–547 (TKLGFKNFLTVAKQKHG) the chain is Cytoplasmic. The helical transmembrane segment at 548-568 (FSLLKILFISLCILCLLQFIV) threads the bilayer. Residues 569–576 (YSYFHREG) are Lumenal-facing. The chain crosses the membrane as a helical span at residues 577-597 (FSVILMGLAAWPWLLHADYAF). Topologically, residues 598–600 (SHK) are cytoplasmic. The helical transmembrane segment at 601–621 (TISVSWSVLTSLLCFFTILPV) threads the bilayer. The Lumenal segment spans residues 622–626 (NKKES). Residues 627-647 (LLFIFAGGFAMSVAGVFYILY) form a helical membrane-spanning segment. The Cytoplasmic portion of the chain corresponds to 648 to 663 (RRNQAFQYSSTVTNKQ). A helical membrane pass occupies residues 664–684 (LVLQVLIIMATVPVTLKIADS). Topologically, residues 685–688 (LQRN) are lumenal. The helical transmembrane segment at 689–709 (IAIPPILRLVAFGLFITSYII) threads the bilayer. Topologically, residues 710 to 737 (PSHHIRSCKHYFLDRLAILFLTFSPTMC) are cytoplasmic. Residues 738-758 (MLSISFEALFYVVLFITLGLW) form a helical membrane-spanning segment. The Lumenal portion of the chain corresponds to 759–792 (MELETELQKYTEQLHPEYSRKKDAKFHLSLSHIR). A helical transmembrane segment spans residues 793–813 (ISLFFYIFINVAFFGTGNVAS). Over 814–835 (LSTFALDSVKRFIPVFNPVTQG) the chain is Cytoplasmic. Residues 836-856 (ALLMYTILVPFIALSAAFGIM) traverse the membrane as a helical segment. Topologically, residues 857-865 (NKRLGGIQQ) are lumenal. Residues 866–886 (VTFFLAVGMADIVTINFFYLV) traverse the membrane as a helical segment. At 887 to 894 (KDEGSWKD) the chain is on the cytoplasmic side. The helical transmembrane segment at 895–915 (IGVSISHFCISNFLILFITAL) threads the bilayer. At 916–935 (EHASAILCKNITYTIHEKVN) the chain is on the lumenal side. N925 carries N-linked (GlcNAc...) asparagine glycosylation.

This sequence belongs to the PIGG/PIGN/PIGO family. PIGN subfamily.

The protein resides in the endoplasmic reticulum membrane. It participates in glycolipid biosynthesis; glycosylphosphatidylinositol-anchor biosynthesis. Ethanolamine phosphate transferase involved in glycosylphosphatidylinositol-anchor biosynthesis. Transfers ethanolamine phosphate to the first alpha-1,4-linked mannose of the glycosylphosphatidylinositol precursor of GPI-anchor. This Schizosaccharomyces pombe (strain 972 / ATCC 24843) (Fission yeast) protein is GPI ethanolamine phosphate transferase 1 (its8).